The sequence spans 329 residues: NADH-quinone oxidoreductase subunit H (329 aa).

A run of 9 helical transmembrane segments spans residues 9–29 (LIKI…ATYI), 42–62 (GPCY…IKLF), 75–95 (FIFT…MAPI), 117–137 (IGFL…ILAG), 154–174 (IQLL…LMVV), 188–208 (GGFL…FLIA), 238–258 (LKWG…SFVI), 269–291 (WGFI…LSMW), and 309–329 (WKIM…IILI).

It belongs to the complex I subunit 1 family. In terms of assembly, NDH-1 is composed of 14 different subunits. Subunits NuoA, H, J, K, L, M, N constitute the membrane sector of the complex.

It is found in the cell inner membrane. It carries out the reaction a quinone + NADH + 5 H(+)(in) = a quinol + NAD(+) + 4 H(+)(out). Its function is as follows. NDH-1 shuttles electrons from NADH, via FMN and iron-sulfur (Fe-S) centers, to quinones in the respiratory chain. The immediate electron acceptor for the enzyme in this species is believed to be ubiquinone. Couples the redox reaction to proton translocation (for every two electrons transferred, four hydrogen ions are translocated across the cytoplasmic membrane), and thus conserves the redox energy in a proton gradient. This subunit may bind ubiquinone. This chain is NADH-quinone oxidoreductase subunit H, found in Helicobacter pylori (strain P12).